A 328-amino-acid chain; its full sequence is Lipoyl synthase (328 aa).

Residues C57, C62, C68, C83, C87, C90, and S298 each coordinate [4Fe-4S] cluster. Positions 69–287 (WSRGTATFML…REEGLSLGFL (219 aa)) constitute a Radical SAM core domain.

The protein belongs to the radical SAM superfamily. Lipoyl synthase family. It depends on [4Fe-4S] cluster as a cofactor.

The protein localises to the cytoplasm. The catalysed reaction is [[Fe-S] cluster scaffold protein carrying a second [4Fe-4S](2+) cluster] + N(6)-octanoyl-L-lysyl-[protein] + 2 oxidized [2Fe-2S]-[ferredoxin] + 2 S-adenosyl-L-methionine + 4 H(+) = [[Fe-S] cluster scaffold protein] + N(6)-[(R)-dihydrolipoyl]-L-lysyl-[protein] + 4 Fe(3+) + 2 hydrogen sulfide + 2 5'-deoxyadenosine + 2 L-methionine + 2 reduced [2Fe-2S]-[ferredoxin]. Its pathway is protein modification; protein lipoylation via endogenous pathway; protein N(6)-(lipoyl)lysine from octanoyl-[acyl-carrier-protein]: step 2/2. In terms of biological role, catalyzes the radical-mediated insertion of two sulfur atoms into the C-6 and C-8 positions of the octanoyl moiety bound to the lipoyl domains of lipoate-dependent enzymes, thereby converting the octanoylated domains into lipoylated derivatives. This chain is Lipoyl synthase, found in Deinococcus geothermalis (strain DSM 11300 / CIP 105573 / AG-3a).